The following is a 254-amino-acid chain: Alcohol dehydrogenase (254 aa).

10 to 33 (FVAGLGGIGLDTSRELVKRNLKNL) contributes to the NAD(+) binding site. S138 provides a ligand contact to substrate. Residue Y151 is the Proton acceptor of the active site.

The protein belongs to the short-chain dehydrogenases/reductases (SDR) family. In terms of assembly, homodimer.

It carries out the reaction a primary alcohol + NAD(+) = an aldehyde + NADH + H(+). The enzyme catalyses a secondary alcohol + NAD(+) = a ketone + NADH + H(+). This is Alcohol dehydrogenase (Adh) from Drosophila persimilis (Fruit fly).